The primary structure comprises 32 residues: Photosystem II reaction center protein T (32 aa).

At M1 the chain carries N-formylmethionine. The Lumenal portion of the chain corresponds to M1–E2. Residues T3 to F23 form a helical membrane-spanning segment. The Cytoplasmic portion of the chain corresponds to R24–K32.

Belongs to the PsbT family. PSII is composed of 1 copy each of membrane proteins PsbA, PsbB, PsbC, PsbD, PsbE, PsbF, PsbH, PsbI, PsbJ, PsbK, PsbL, PsbM, PsbT, PsbX, PsbY, PsbZ, Psb30/Ycf12, PsbO, CyanoQ (PsbQ), PsbU, PsbV and a large number of cofactors. It forms dimeric complexes. Part of a photosystem II (PSII) assembly intermediate complex PSII-I; crystallized from a strain deleted of psbJ, it forms monomeric PSII before addition of the oxygen evolving complex. PSII-I includes 3 assembly factors not found in mature PSII (Psb27, Psb28 and Psb34). PSII binds multiple chlorophylls, carotenoids and specific lipids. is required as a cofactor.

The protein localises to the cellular thylakoid membrane. Its function is as follows. Found at the monomer-monomer interface of the photosystem II (PS II) dimer, plays a role in assembly and dimerization of PSII. PSII is a light-driven water plastoquinone oxidoreductase, using light energy to abstract electrons from H(2)O, generating a proton gradient subsequently used for ATP formation. The polypeptide is Photosystem II reaction center protein T (Thermosynechococcus vestitus (strain NIES-2133 / IAM M-273 / BP-1)).